The following is a 142-amino-acid chain: Probable inactive dual specificity protein phosphatase-like At4g18593 (142 aa).

Belongs to the protein-tyrosine phosphatase family. Non-receptor class dual specificity subfamily.

In Arabidopsis thaliana (Mouse-ear cress), this protein is Probable inactive dual specificity protein phosphatase-like At4g18593.